We begin with the raw amino-acid sequence, 283 residues long: tRNA (guanine-N(1)-)-methyltransferase (283 aa).

S-adenosyl-L-methionine-binding positions include G113 and 133–138 (IGDYVL).

It belongs to the RNA methyltransferase TrmD family. As to quaternary structure, homodimer.

Its subcellular location is the cytoplasm. It catalyses the reaction guanosine(37) in tRNA + S-adenosyl-L-methionine = N(1)-methylguanosine(37) in tRNA + S-adenosyl-L-homocysteine + H(+). Specifically methylates guanosine-37 in various tRNAs. In Parafrankia sp. (strain EAN1pec), this protein is tRNA (guanine-N(1)-)-methyltransferase.